Consider the following 417-residue polypeptide: UDP-N-acetylglucosamine 1-carboxyvinyltransferase (417 aa).

22 to 23 is a phosphoenolpyruvate binding site; that stretch reads KN. Arginine 93 contacts UDP-N-acetyl-alpha-D-glucosamine. Cysteine 117 serves as the catalytic Proton donor. A 2-(S-cysteinyl)pyruvic acid O-phosphothioketal modification is found at cysteine 117. UDP-N-acetyl-alpha-D-glucosamine contacts are provided by residues 122–126, aspartate 304, and isoleucine 326; that span reads RPVDQ.

The protein belongs to the EPSP synthase family. MurA subfamily.

The protein localises to the cytoplasm. The enzyme catalyses phosphoenolpyruvate + UDP-N-acetyl-alpha-D-glucosamine = UDP-N-acetyl-3-O-(1-carboxyvinyl)-alpha-D-glucosamine + phosphate. The protein operates within cell wall biogenesis; peptidoglycan biosynthesis. Cell wall formation. Adds enolpyruvyl to UDP-N-acetylglucosamine. The chain is UDP-N-acetylglucosamine 1-carboxyvinyltransferase from Neisseria meningitidis serogroup C (strain 053442).